The primary structure comprises 324 residues: Olfactory receptor 51D1 (324 aa).

The Extracellular portion of the chain corresponds to 1–38 (MQKPQLLVPIIATSNGNLVHAAYFLLVGIPGLGPTIHF). The helical transmembrane segment at 39-59 (WLAFPLCFMYALATLGNLTIV) threads the bilayer. Residues 60–67 (LIIRVERR) lie on the Cytoplasmic side of the membrane. Residues 68 to 88 (LHEPMYLFLAMLSTIDLVLSS) traverse the membrane as a helical segment. The Extracellular segment spans residues 89–112 (ITMPKMASLFLMGIQEIEFNICLA). A disulfide bond links C110 and C202. A helical membrane pass occupies residues 113 to 133 (QMFLIHALSAVESAVLLAMAF). At 134–152 (DRFVAICHPLRHASVLTGC) the chain is on the cytoplasmic side. Residues 153-173 (TVAKIGLSALTRGFVFFFPLP) form a helical membrane-spanning segment. The Extracellular segment spans residues 174–209 (FILKWLSYCQTHTVTHSFCLHQDIMKLSCTDTRVNV). The helical transmembrane segment at 210–230 (VYGLFIILSVMGVDSLFIGFS) threads the bilayer. The Cytoplasmic portion of the chain corresponds to 231–250 (YILILWAVLELSSRRAALKA). Residues 251–271 (FNTCISHLCAVLVFYVPLIGL) traverse the membrane as a helical segment. The Extracellular portion of the chain corresponds to 272 to 285 (SVVHRLGGPTSLLH). A helical transmembrane segment spans residues 286–306 (VVMANTYLLLPPVVNPLVYGA). Residues 307–324 (KTKEICSRVLCMFSQGGK) are Cytoplasmic-facing.

Belongs to the G-protein coupled receptor 1 family.

It is found in the cell membrane. In terms of biological role, odorant receptor. This chain is Olfactory receptor 51D1 (OR51D1), found in Homo sapiens (Human).